Consider the following 92-residue polypeptide: Small ribosomal subunit protein bS20 (92 aa).

Disordered stretches follow at residues 1-25 (MALR…NRAK) and 68-92 (HKNA…AQQA). Residues 80–92 (AKAINKAKAAQQA) show a composition bias toward low complexity.

The protein belongs to the bacterial ribosomal protein bS20 family.

Its function is as follows. Binds directly to 16S ribosomal RNA. This Deinococcus radiodurans (strain ATCC 13939 / DSM 20539 / JCM 16871 / CCUG 27074 / LMG 4051 / NBRC 15346 / NCIMB 9279 / VKM B-1422 / R1) protein is Small ribosomal subunit protein bS20.